The primary structure comprises 456 residues: Bifunctional protein GlmU (456 aa).

The tract at residues 1-228 is pyrophosphorylase; the sequence is MPQNTLNIVI…SHLAAGVNNK (228 aa). UDP-N-acetyl-alpha-D-glucosamine-binding positions include 11 to 14, Lys-25, Gln-75, 80 to 81, 102 to 104, Gly-138, Glu-153, Asn-168, and Asn-226; these read LAAG, GT, and YGD. Residue Asp-104 coordinates Mg(2+). Asn-226 lines the Mg(2+) pocket. The linker stretch occupies residues 229-249; it reads LQLAELERIFQTGQAQELLKA. The N-acetyltransferase stretch occupies residues 250 to 456; sequence GVTLHDPARF…GWVRPEKDKQ (207 aa). Residues Arg-332 and Lys-350 each coordinate UDP-N-acetyl-alpha-D-glucosamine. His-362 acts as the Proton acceptor in catalysis. Tyr-365 and Asn-376 together coordinate UDP-N-acetyl-alpha-D-glucosamine. Acetyl-CoA is bound by residues Ala-379, 385–386, Ser-404, Ala-422, and Arg-439; that span reads NY.

The protein in the N-terminal section; belongs to the N-acetylglucosamine-1-phosphate uridyltransferase family. It in the C-terminal section; belongs to the transferase hexapeptide repeat family. Homotrimer. Mg(2+) serves as cofactor.

It localises to the cytoplasm. The enzyme catalyses alpha-D-glucosamine 1-phosphate + acetyl-CoA = N-acetyl-alpha-D-glucosamine 1-phosphate + CoA + H(+). It carries out the reaction N-acetyl-alpha-D-glucosamine 1-phosphate + UTP + H(+) = UDP-N-acetyl-alpha-D-glucosamine + diphosphate. The protein operates within nucleotide-sugar biosynthesis; UDP-N-acetyl-alpha-D-glucosamine biosynthesis; N-acetyl-alpha-D-glucosamine 1-phosphate from alpha-D-glucosamine 6-phosphate (route II): step 2/2. It functions in the pathway nucleotide-sugar biosynthesis; UDP-N-acetyl-alpha-D-glucosamine biosynthesis; UDP-N-acetyl-alpha-D-glucosamine from N-acetyl-alpha-D-glucosamine 1-phosphate: step 1/1. Its pathway is bacterial outer membrane biogenesis; LPS lipid A biosynthesis. Its function is as follows. Catalyzes the last two sequential reactions in the de novo biosynthetic pathway for UDP-N-acetylglucosamine (UDP-GlcNAc). The C-terminal domain catalyzes the transfer of acetyl group from acetyl coenzyme A to glucosamine-1-phosphate (GlcN-1-P) to produce N-acetylglucosamine-1-phosphate (GlcNAc-1-P), which is converted into UDP-GlcNAc by the transfer of uridine 5-monophosphate (from uridine 5-triphosphate), a reaction catalyzed by the N-terminal domain. The polypeptide is Bifunctional protein GlmU (Neisseria meningitidis serogroup C (strain 053442)).